Consider the following 339-residue polypeptide: Tetraacyldisaccharide 4'-kinase (339 aa).

61 to 68 contributes to the ATP binding site; it reads TAGGTGKT.

It belongs to the LpxK family.

It catalyses the reaction a lipid A disaccharide + ATP = a lipid IVA + ADP + H(+). It functions in the pathway glycolipid biosynthesis; lipid IV(A) biosynthesis; lipid IV(A) from (3R)-3-hydroxytetradecanoyl-[acyl-carrier-protein] and UDP-N-acetyl-alpha-D-glucosamine: step 6/6. Its function is as follows. Transfers the gamma-phosphate of ATP to the 4'-position of a tetraacyldisaccharide 1-phosphate intermediate (termed DS-1-P) to form tetraacyldisaccharide 1,4'-bis-phosphate (lipid IVA). The sequence is that of Tetraacyldisaccharide 4'-kinase from Stenotrophomonas maltophilia (strain R551-3).